We begin with the raw amino-acid sequence, 479 residues long: Probable periplasmic serine endoprotease DegP-like (479 aa).

An N-terminal signal peptide occupies residues 1-27 (MSIPRMKSYFSLIAAVLMLGQVATAQA). The disordered stretch occupies residues 77-99 (LERSMPPGSRPPGAGKGDRQRET). Active-site charge relay system residues include histidine 119, aspartate 149, and serine 222. Residues 220 to 222 (GNS) and 277 to 281 (LGVVI) each bind substrate. PDZ domains are found at residues 266–357 (LKAS…IRDG) and 363–468 (TVTV…LRQG).

It belongs to the peptidase S1C family.

The protein localises to the periplasm. It carries out the reaction Acts on substrates that are at least partially unfolded. The cleavage site P1 residue is normally between a pair of hydrophobic residues, such as Val-|-Val.. Might be efficient in the degradation of transiently denatured and unfolded proteins which accumulate in the periplasm following stress conditions. The sequence is that of Probable periplasmic serine endoprotease DegP-like (mucD) from Pseudomonas savastanoi pv. phaseolicola (strain 1448A / Race 6) (Pseudomonas syringae pv. phaseolicola (strain 1448A / Race 6)).